The following is a 227-amino-acid chain: Sperm-associated antigen 7 (227 aa).

The tract at residues 1-45 (MADLLGSILSSMEKPPSLGDQESRRKAREQAARLKKLQEQDKQQK) is disordered. Ala-2 is modified (N-acetylalanine). Basic and acidic residues predominate over residues 21-45 (QESRRKAREQAARLKKLQEQDKQQK). The Nuclear localization signal motif lies at 35-51 (KKLQEQDKQQKVEFRKR). Residues 46 to 109 (VEFRKRMEKE…DCRYVMIFKK (64 aa)) form the R3H domain. Phosphoserine is present on Ser-114. Positions 118–161 (LDSYRHGEEWDPQKAEEKRKLKELAQKQEEEAAQQGPAVVSPAS) are disordered. Basic and acidic residues predominate over residues 119–147 (DSYRHGEEWDPQKAEEKRKLKELAQKQEE). The Nuclear localization signal signature appears at 122-139 (RHGEEWDPQKAEEKRKLK). Phosphoserine occurs at positions 158 and 202.

The protein resides in the nucleus. In Mus musculus (Mouse), this protein is Sperm-associated antigen 7 (Spag7).